Reading from the N-terminus, the 224-residue chain is ATP-dependent dethiobiotin synthetase BioD (224 aa).

14–19 (GIGKTV) lines the ATP pocket. T18 contacts Mg(2+). Residue K39 is part of the active site. S43 contacts substrate. ATP contacts are provided by residues D56, 117–120 (EGVG), and 177–178 (NE). Mg(2+) is bound by residues D56 and E117.

It belongs to the dethiobiotin synthetase family. Homodimer. Requires Mg(2+) as cofactor.

Its subcellular location is the cytoplasm. It catalyses the reaction (7R,8S)-7,8-diammoniononanoate + CO2 + ATP = (4R,5S)-dethiobiotin + ADP + phosphate + 3 H(+). It functions in the pathway cofactor biosynthesis; biotin biosynthesis; biotin from 7,8-diaminononanoate: step 1/2. Catalyzes a mechanistically unusual reaction, the ATP-dependent insertion of CO2 between the N7 and N8 nitrogen atoms of 7,8-diaminopelargonic acid (DAPA, also called 7,8-diammoniononanoate) to form a ureido ring. The sequence is that of ATP-dependent dethiobiotin synthetase BioD from Xanthomonas campestris pv. campestris (strain 8004).